Reading from the N-terminus, the 195-residue chain is Putative CheY-P phosphatase CheC1 (195 aa).

It belongs to the CheC family.

Functionally, catalyzes the dephosphorylation of CheY-P. This Halobacterium salinarum (strain ATCC 29341 / DSM 671 / R1) protein is Putative CheY-P phosphatase CheC1 (cheC1).